The following is a 311-amino-acid chain: Aspartate carbamoyltransferase catalytic subunit (311 aa).

Residues Arg-58 and Thr-59 each contribute to the carbamoyl phosphate site. Residue Lys-86 coordinates L-aspartate. Carbamoyl phosphate is bound by residues Arg-108, His-136, and Gln-139. 2 residues coordinate L-aspartate: Arg-169 and Arg-224. Positions 265 and 266 each coordinate carbamoyl phosphate.

The protein belongs to the aspartate/ornithine carbamoyltransferase superfamily. ATCase family. As to quaternary structure, heterododecamer (2C3:3R2) of six catalytic PyrB chains organized as two trimers (C3), and six regulatory PyrI chains organized as three dimers (R2).

It catalyses the reaction carbamoyl phosphate + L-aspartate = N-carbamoyl-L-aspartate + phosphate + H(+). Its pathway is pyrimidine metabolism; UMP biosynthesis via de novo pathway; (S)-dihydroorotate from bicarbonate: step 2/3. Catalyzes the condensation of carbamoyl phosphate and aspartate to form carbamoyl aspartate and inorganic phosphate, the committed step in the de novo pyrimidine nucleotide biosynthesis pathway. In Geotalea daltonii (strain DSM 22248 / JCM 15807 / FRC-32) (Geobacter daltonii), this protein is Aspartate carbamoyltransferase catalytic subunit.